The chain runs to 30 residues: MTDAQVFTILAIALVPAVMALLLGSALARS.

Residues 6-26 (VFTILAIALVPAVMALLLGSA) form a helical membrane-spanning segment.

This sequence belongs to the PsaM family.

It localises to the cellular thylakoid membrane. The chain is Photosystem I reaction center subunit XII from Synechococcus sp. (strain JA-2-3B'a(2-13)) (Cyanobacteria bacterium Yellowstone B-Prime).